Consider the following 409-residue polypeptide: Histidinol dehydrogenase homolog (409 aa).

Belongs to the histidinol dehydrogenase family.

The sequence is that of Histidinol dehydrogenase homolog from Synechocystis sp. (strain ATCC 27184 / PCC 6803 / Kazusa).